Consider the following 590-residue polypeptide: Aspartate--tRNA(Asp/Asn) ligase (590 aa).

L-aspartate is bound at residue E173. An aspartate region spans residues Q197 to K200. Residue R219 participates in L-aspartate binding. Residues R219 to E221 and Q228 contribute to the ATP site. H450 contacts L-aspartate. E484 serves as a coordination point for ATP. R491 lines the L-aspartate pocket. Residue G536–R539 coordinates ATP.

This sequence belongs to the class-II aminoacyl-tRNA synthetase family. Type 1 subfamily. In terms of assembly, homodimer.

The protein localises to the cytoplasm. The catalysed reaction is tRNA(Asx) + L-aspartate + ATP = L-aspartyl-tRNA(Asx) + AMP + diphosphate. Functionally, aspartyl-tRNA synthetase with relaxed tRNA specificity since it is able to aspartylate not only its cognate tRNA(Asp) but also tRNA(Asn). Reaction proceeds in two steps: L-aspartate is first activated by ATP to form Asp-AMP and then transferred to the acceptor end of tRNA(Asp/Asn). The protein is Aspartate--tRNA(Asp/Asn) ligase of Coxiella burnetii (strain RSA 331 / Henzerling II).